The following is a 390-amino-acid chain: tRNA-specific 2-thiouridylase MnmA (390 aa).

Residues 36-43 (GMSGGVDS) and Met-62 each bind ATP. The interval 122 to 124 (NPD) is interaction with target base in tRNA. Cys-127 functions as the Nucleophile in the catalytic mechanism. Residues Cys-127 and Cys-223 are joined by a disulfide bond. Residue Gly-151 coordinates ATP. The tract at residues 173–175 (KDQ) is interaction with tRNA. Cys-223 (cysteine persulfide intermediate) is an active-site residue. Residues 335 to 336 (RY) form an interaction with tRNA region.

It belongs to the MnmA/TRMU family.

It localises to the cytoplasm. It carries out the reaction S-sulfanyl-L-cysteinyl-[protein] + uridine(34) in tRNA + AH2 + ATP = 2-thiouridine(34) in tRNA + L-cysteinyl-[protein] + A + AMP + diphosphate + H(+). Catalyzes the 2-thiolation of uridine at the wobble position (U34) of tRNA, leading to the formation of s(2)U34. The sequence is that of tRNA-specific 2-thiouridylase MnmA from Marinomonas sp. (strain MWYL1).